We begin with the raw amino-acid sequence, 275 residues long: NH(3)-dependent NAD(+) synthetase (275 aa).

50 to 57 lines the ATP pocket; the sequence is GISGGVDS. Asp56 serves as a coordination point for Mg(2+). Arg147 serves as a coordination point for deamido-NAD(+). Thr167 provides a ligand contact to ATP. Glu172 serves as a coordination point for Mg(2+). Deamido-NAD(+) is bound by residues Lys180 and Asp187. The ATP site is built by Lys196 and Thr218. 267 to 268 contacts deamido-NAD(+); that stretch reads HK.

Belongs to the NAD synthetase family. As to quaternary structure, homodimer.

It carries out the reaction deamido-NAD(+) + NH4(+) + ATP = AMP + diphosphate + NAD(+) + H(+). It participates in cofactor biosynthesis; NAD(+) biosynthesis; NAD(+) from deamido-NAD(+) (ammonia route): step 1/1. Catalyzes the ATP-dependent amidation of deamido-NAD to form NAD. Uses ammonia as a nitrogen source. This is NH(3)-dependent NAD(+) synthetase from Pseudomonas putida (strain ATCC 700007 / DSM 6899 / JCM 31910 / BCRC 17059 / LMG 24140 / F1).